A 171-amino-acid polypeptide reads, in one-letter code: Dual specificity protein phosphatase OPG106 (171 aa).

The region spanning serine 23–asparagine 171 is the Tyrosine-protein phosphatase domain. The active-site Phosphocysteine intermediate is the cysteine 110.

This sequence belongs to the protein-tyrosine phosphatase family. Non-receptor class dual specificity subfamily. As to quaternary structure, homodimer.

It is found in the virion. Its subcellular location is the host cytoplasm. It catalyses the reaction O-phospho-L-tyrosyl-[protein] + H2O = L-tyrosyl-[protein] + phosphate. The enzyme catalyses O-phospho-L-seryl-[protein] + H2O = L-seryl-[protein] + phosphate. With respect to regulation, inhibited by NSC-62914, NSC-28086, NSC-105687, NSC-23173, 540211 and 217691 with IC50 values of 48, 51, 212, 342, 4 and 11 uM, respectively. Its function is as follows. Serine/tyrosine phosphatase which down-regulates cellular antiviral response by dephosphorylating activated host STAT1 and blocking interferon (IFN)-stimulated innate immune responses. Dephosphorylates the OPG144 protein. The sequence is that of Dual specificity protein phosphatase OPG106 (OPG106) from Homo sapiens (Human).